The following is a 214-amino-acid chain: 3-isopropylmalate dehydratase small subunit (214 aa).

The protein belongs to the LeuD family. LeuD type 1 subfamily. Heterodimer of LeuC and LeuD.

It carries out the reaction (2R,3S)-3-isopropylmalate = (2S)-2-isopropylmalate. It participates in amino-acid biosynthesis; L-leucine biosynthesis; L-leucine from 3-methyl-2-oxobutanoate: step 2/4. Functionally, catalyzes the isomerization between 2-isopropylmalate and 3-isopropylmalate, via the formation of 2-isopropylmaleate. The chain is 3-isopropylmalate dehydratase small subunit from Pseudomonas putida (strain W619).